The following is a 368-amino-acid chain: Glutaminyl-peptide cyclotransferase (368 aa).

The N-terminal stretch at 1–23 (MARERRDSKAATFFCLAWALCLA) is a signal peptide. Residues Asn53 and Asn65 are each glycosylated (N-linked (GlcNAc...) asparagine). A disulfide bridge links Cys143 with Cys169. Asp164 is a binding site for Zn(2+). The active-site Proton acceptor is Glu207. Glu208 is a Zn(2+) binding site. Catalysis depends on Asp254, which acts as the Proton acceptor. The N-linked (GlcNAc...) asparagine glycan is linked to Asn292. His336 contacts Zn(2+). Residue Asn352 is glycosylated (N-linked (GlcNAc...) asparagine).

This sequence belongs to the glutaminyl-peptide cyclotransferase family. In terms of tissue distribution, expressed by the venom gland.

It is found in the secreted. The catalysed reaction is N-terminal L-glutaminyl-[peptide] = N-terminal 5-oxo-L-prolyl-[peptide] + NH4(+). Its function is as follows. Responsible for the biosynthesis of pyroglutamyl peptides. Has a bias against acidic and tryptophan residues adjacent to the N-terminal glutaminyl residue and a lack of importance of chain length after the second residue. Also catalyzes N-terminal pyroglutamate formation. In Bothrops jararaca (Jararaca), this protein is Glutaminyl-peptide cyclotransferase (QPCT).